The primary structure comprises 461 residues: General transcription and DNA repair factor IIH subunit SSL1 (461 aa).

The interval 1-70 is disordered; the sequence is MAPVVISESE…RLSNRNLQGS (70 aa). A compositionally biased stretch (basic and acidic residues) spans 26-37; sequence VHFDGEGDDRVD. Residues 53–63 show a composition bias toward basic residues; the sequence is HVQRKKKKRLS. One can recognise a VWFA domain in the interval 125–304; it reads SLILTLDCSE…THLKELFNEA (180 aa). A C4-type zinc finger spans residues 349–366; the sequence is CPNCHSKVCSLPTVCPCC.

The protein belongs to the GTF2H2 family. In terms of assembly, component of the 7-subunit TFIIH core complex composed of XPB/SSL2, XPD/RAD3, SSL1, TFB1, TFB2, TFB4 and TFB5, which is active in NER. The core complex associates with the 3-subunit CTD-kinase module TFIIK composed of CCL1, KIN28 and TFB3 to form the 10-subunit holoenzyme (holo-TFIIH) active in transcription. An additionnal subunit, TFB6, plays a role in the dissociation of the SSL2 helicase from TFIIH after transcription initiation.

The protein localises to the nucleus. Functionally, component of the general transcription and DNA repair factor IIH (TFIIH) core complex, which is involved in general and transcription-coupled nucleotide excision repair (NER) of damaged DNA and, when complexed to TFIIK, in RNA transcription by RNA polymerase II. In NER, TFIIH acts by opening DNA around the lesion to allow the excision of the damaged oligonucleotide and its replacement by a new DNA fragment. In transcription, TFIIH has an essential role in transcription initiation. When the pre-initiation complex (PIC) has been established, TFIIH is required for promoter opening and promoter escape. Phosphorylation of the C-terminal tail (CTD) of the largest subunit of RNA polymerase II by the kinase module TFIIK controls the initiation of transcription. The polypeptide is General transcription and DNA repair factor IIH subunit SSL1 (SSL1) (Saccharomyces cerevisiae (strain ATCC 204508 / S288c) (Baker's yeast)).